Consider the following 422-residue polypeptide: Gamma-glutamyl phosphate reductase (422 aa).

Belongs to the gamma-glutamyl phosphate reductase family.

The protein localises to the cytoplasm. The catalysed reaction is L-glutamate 5-semialdehyde + phosphate + NADP(+) = L-glutamyl 5-phosphate + NADPH + H(+). It participates in amino-acid biosynthesis; L-proline biosynthesis; L-glutamate 5-semialdehyde from L-glutamate: step 2/2. Catalyzes the NADPH-dependent reduction of L-glutamate 5-phosphate into L-glutamate 5-semialdehyde and phosphate. The product spontaneously undergoes cyclization to form 1-pyrroline-5-carboxylate. This chain is Gamma-glutamyl phosphate reductase, found in Saccharophagus degradans (strain 2-40 / ATCC 43961 / DSM 17024).